Reading from the N-terminus, the 656-residue chain is tRNA(Met) cytidine acetyltransferase TmcA (656 aa).

ATP contacts are provided by residues Gln-145, 167-176 (GRGKSALLGM), and Arg-291. Positions 368-542 (SEGKYNRQFF…SGCYSAIALK (175 aa)) constitute an N-acetyltransferase domain. Acetyl-CoA is bound by residues 474-476 (IAV), 481-487 (QQKGIGQ), and Glu-510.

Belongs to the RNA cytidine acetyltransferase family. TmcA subfamily.

It localises to the cytoplasm. It catalyses the reaction cytidine(34) in elongator tRNA(Met) + acetyl-CoA + ATP + H2O = N(4)-acetylcytidine(34) in elongator tRNA(Met) + ADP + phosphate + CoA + H(+). Catalyzes the formation of N(4)-acetylcytidine (ac(4)C) at the wobble position of tRNA(Met), by using acetyl-CoA as an acetyl donor and ATP (or GTP). This chain is tRNA(Met) cytidine acetyltransferase TmcA, found in Haemophilus influenzae (strain ATCC 51907 / DSM 11121 / KW20 / Rd).